A 104-amino-acid polypeptide reads, in one-letter code: ATP-dependent Clp protease adapter protein ClpS (104 aa).

Belongs to the ClpS family. Binds to the N-terminal domain of the chaperone ClpA.

Involved in the modulation of the specificity of the ClpAP-mediated ATP-dependent protein degradation. The polypeptide is ATP-dependent Clp protease adapter protein ClpS (Paraburkholderia phymatum (strain DSM 17167 / CIP 108236 / LMG 21445 / STM815) (Burkholderia phymatum)).